Consider the following 154-residue polypeptide: uncharacterized protein (154 aa).

Coiled coils occupy residues 8 to 48 (DEEV…AIEA) and 89 to 138 (VQEL…RGLV).

This is an uncharacterized protein from Treponema pallidum (strain Nichols).